The primary structure comprises 169 residues: uncharacterized protein (169 aa).

In terms of domain architecture, N-acetyltransferase spans 4–160 (IEVKRLLVNY…EGVKEQLSED (157 aa)).

This is an uncharacterized protein from Halalkalibacterium halodurans (strain ATCC BAA-125 / DSM 18197 / FERM 7344 / JCM 9153 / C-125) (Bacillus halodurans).